A 2562-amino-acid chain; its full sequence is Zinc finger homeobox protein 2 (2562 aa).

Over residues 1–13 the composition is skewed to polar residues; sequence MATLNSASPSGTV. Disordered regions lie at residues 1–88 and 337–410; these read MATL…PPKD and PSPP…DPPP. Residues 56–73 are compositionally biased toward basic and acidic residues; it reads GGERLESGSDLDPPKEIG. 2 consecutive C2H2-type zinc fingers follow at residues 446 to 469 and 501 to 525; these read LKCP…REKH and YRCD…SDKH. Disordered regions lie at residues 530–559, 603–651, and 669–705; these read QGFQ…EPKT, PPGL…PDKP, and RKFP…PSPD. Positions 609-622 are enriched in pro residues; that stretch reads PGPPPPPGAAPTNP. A compositionally biased stretch (polar residues) spans 690–704; the sequence is LLGSSSDGLPTSPSP. C2H2-type zinc fingers lie at residues 752-776, 815-839, and 864-888; these read HRCK…TDKH, LRCN…GSAH, and YHCL…TPAH. Positions 923 to 966 are disordered; the sequence is RLQTPGKASDTPLAQPPTSEKDAQNKTEQQASEVTEDRSGPPRD. The segment at 1003 to 1026 adopts a C2H2-type 6 zinc-finger fold; sequence YRCPLCQEQLVGRPALHFHLSHLH. Disordered stretches follow at residues 1058-1126 and 1140-1166; these read NPVE…PAPR and MSEE…HPLT. Composition is skewed to pro residues over residues 1091–1101 and 1114–1124; these read SPDPPLEPPLA and DQPPSPAPSPA. 2 consecutive C2H2-type zinc fingers follow at residues 1185 to 1211 and 1242 to 1266; these read YKCT…SHLH and FKCT…SVLH. Basic and acidic residues predominate over residues 1278–1305; it reads RAEGAERGQEEFKEGETEGEAGTEKKGP. The segment at 1278–1313 is disordered; that stretch reads RAEGAERGQEEFKEGETEGEAGTEKKGPDPGGFMSG. Residues 1474–1497 form a C2H2-type 9 zinc finger; the sequence is LACGACGKLFSNMLILKTHEEHVH. The tract at residues 1520–1584 is disordered; sequence LYPPPVEPPK…EGSRGSLPPA (65 aa). The segment covering 1521–1531 has biased composition (pro residues); sequence YPPPVEPPKPP. The segment at residues 1589–1648 is a DNA-binding region (homeobox 1); it reads RRFSRTKFTEFQTQALQSFFETSAYPKDGEVERLASLLGLASRVVVVWFQNARQKARKNA. A C2H2-type 10; degenerate zinc finger spans residues 1664–1687; the sequence is SGCRRCHATFACVFELVRHLKKCY. The segment at 1689-1760 is disordered; sequence DQPPEEEEEA…EGKAPPSPPV (72 aa). Positions 1690 to 1713 are enriched in acidic residues; the sequence is QPPEEEEEAERGEEEEEVEEEEAE. Residues 1743–1752 show a composition bias toward basic and acidic residues; that stretch reads TRPESKESEG. The C2H2-type 11 zinc finger occupies 1761–1783; that stretch reads YACDQCAASFPSQDLLTTHHRLH. Disordered stretches follow at residues 1814-1853, 1907-1934, 1971-2057, 2114-2136, 2186-2210, 2263-2313, and 2391-2429; these read SGTS…KDKR, RKGQ…PAPF, PLPF…DSMG, KKAK…TSAA, PAPE…PLGA, QTAG…PNSS, and LQQP…LTGS. A DNA-binding region (homeobox 2) is located at residues 1851–1910; sequence DKRLRTTILPEQLEILYRWYMQDSNPTRKMLDCISEEVGLKKRVVQVWFQNTRARERKGQ. Positions 1985–1996 are enriched in pro residues; that stretch reads TPEPPPPLPPPA. A compositionally biased stretch (low complexity) spans 2008 to 2037; sequence KASPESEACSPSAGDLSDSSASSLAEPESP. The segment covering 2038–2051 has biased composition (gly residues); the sequence is GAGGTSGGPGGGTG. The segment at residues 2058–2117 is a DNA-binding region (homeobox 3); sequence QRRYRTQMSSLQLKIMKACYEAYRTPTMQECEVLGEEIGLPKRVIQVWFQNARAKEKKAK. Over residues 2188-2200 the composition is skewed to pro residues; that stretch reads PETPLAPKGPPAT. The segment covering 2275–2286 has biased composition (polar residues); it reads PVSNQTNSSTDP. Over residues 2295–2305 the composition is skewed to basic and acidic residues; it reads SGDKVSGERKP. Pro residues predominate over residues 2395–2411; sequence PQAPEPTATAPPKPPEL. The segment at 2441–2461 adopts a C2H2-type 12; degenerate zinc-finger fold; sequence YLCRQCKMAFDGEAPATAHQR. A C2H2-type 13 zinc finger spans residues 2485 to 2509; that stretch reads YHCLACEVLLSGREALASHLRSSAH. 2 disordered regions span residues 2506–2525 and 2540–2562; these read SSAH…ITVT and EEAR…LLAL. Positions 2553-2562 are enriched in low complexity; sequence TTTTSTLLAL.

As to expression, expressed in brain (at protein level). Expressed at the highest levels in the pyramidal cell layer of the hippocampus, the suprachiasmatic nucleus, laterodorsal thalamic nucleus, lateral geniculate nucleus, substantia nigra pars compacta, and magnocellular part of the red nucleus (at protein level). Highly expressed in dorsal root ganglia. Expressed at lower levels in kidney, stomach, liver, heart and testis.

It localises to the nucleus. Its function is as follows. Transcriptional regulator that is critical for the regulation of pain perception and processing of noxious stimuli. In Mus musculus (Mouse), this protein is Zinc finger homeobox protein 2.